Consider the following 199-residue polypeptide: Elongation factor Ts (199 aa).

The tract at residues T82–V85 is involved in Mg(2+) ion dislocation from EF-Tu.

It belongs to the EF-Ts family.

It localises to the cytoplasm. In terms of biological role, associates with the EF-Tu.GDP complex and induces the exchange of GDP to GTP. It remains bound to the aminoacyl-tRNA.EF-Tu.GTP complex up to the GTP hydrolysis stage on the ribosome. In Leptospira interrogans serogroup Icterohaemorrhagiae serovar Lai (strain 56601), this protein is Elongation factor Ts.